The sequence spans 210 residues: Glycerol-3-phosphate acyltransferase (210 aa).

5 consecutive transmembrane segments (helical) span residues 1–21 (MLLSVVAIALLAYLLGSFPAG), 53–73 (GPALVVFITDILKGVLAVVAA), 87–107 (IAWLAAFAAIIAVVGHSLPVW), 122–142 (VLLALSPVVGLSGFGAFLLLL), and 147–167 (IVSLGSIAGAITVIVLMLILP).

This sequence belongs to the PlsY family. As to quaternary structure, probably interacts with PlsX.

The protein localises to the cell inner membrane. The catalysed reaction is an acyl phosphate + sn-glycerol 3-phosphate = a 1-acyl-sn-glycero-3-phosphate + phosphate. The protein operates within lipid metabolism; phospholipid metabolism. Catalyzes the transfer of an acyl group from acyl-phosphate (acyl-PO(4)) to glycerol-3-phosphate (G3P) to form lysophosphatidic acid (LPA). This enzyme utilizes acyl-phosphate as fatty acyl donor, but not acyl-CoA or acyl-ACP. The sequence is that of Glycerol-3-phosphate acyltransferase from Synechococcus elongatus (strain ATCC 33912 / PCC 7942 / FACHB-805) (Anacystis nidulans R2).